Here is a 164-residue protein sequence, read N- to C-terminus: Anthrone oxygenase AgnL2 (164 aa).

3 consecutive transmembrane segments (helical) span residues 11 to 31, 48 to 70, and 85 to 105; these read VVTG…AVPV, RMYH…LYAY, and VFAL…LCMV.

The protein belongs to the anthrone oxygenase family.

Its subcellular location is the membrane. The enzyme catalyses emodin anthrone + O2 = emodin + H2O + H(+). It participates in secondary metabolite biosynthesis. Anthrone oxygenase; part of the gene cluster that mediates the biosynthesis of agnestins, dihydroxy-xanthone metabolites. The pathway begins with the assembly and cyclization of atrochrysone thioester by the non-reducing polyketide synthase Agnpks1. The atrochrysone carboxyl ACP thioesterase AgnL7 then breaks the thioester bond and releases the atrochrysone carboxylic acid as the first enzyme-free intermediate. The decarboxylase AgnL1 then catalyzes the concerted decarboxylation-elimination required to convert atochrysone carboxylic acid into emodin anthrone, which is further oxidized to emodin by the anthrone oxygenase AgnL2. Emodin then undergoes reduction catalyzed by the oxidoreductase AgnL4 to yield the dihydroquinone tautomer which is the substrate for reduction by the short chain dehydrogenase AgnL6 reduction to produce hydroxyketone, followed by AgnL8 dehydration and likely spontaneous autoxidation to chrysophanol. Baeyer-Villiger oxidation by the oxidase AgnL3 leads to monodictyphenone via cleavage of the C-10/C-10a bond of chrysophanol. Alternative cleavage at the C-4a/C-10 bond of chrysophanol also leads to the formation some cephalone F. Further conversion to agnestins A and B, requires reduction to dihydro-monodictyphenone, oxidation to agnestin C probably via an epoxide, and rearrangement to either agnestin A or agnestin B directly, although agnestin A or agnestin B can also interconvert. Within the cluster, AgnR1 is the only unassigned oxidoreductase present which could be involved in this conversion. However, AgnR1 seems not to be involved in this step, and thus genes involved in the proposed oxidation/reduction may be located elsewhere on the genome. Further agnestin A derivatives are probably formed by spontaneous decarboxylations, dehydrations and methanolysis reactions. The polypeptide is Anthrone oxygenase AgnL2 (Paecilomyces divaricatus (Penicillium divaricatum)).